A 113-amino-acid polypeptide reads, in one-letter code: uncharacterized protein (113 aa).

The interval 31–113 (SNNNNNNNNN…YSPTKFNLQY (83 aa)) is disordered. Over residues 32–98 (NNNNNNNNNN…NNNNNNNNNN (67 aa)) the composition is skewed to low complexity. Residues 99–113 (SSSFEYSPTKFNLQY) are compositionally biased toward polar residues.

This is an uncharacterized protein from Dictyostelium discoideum (Social amoeba).